The primary structure comprises 110 residues: UPF0122 protein lwe1821 (110 aa).

It belongs to the UPF0122 family.

Functionally, might take part in the signal recognition particle (SRP) pathway. This is inferred from the conservation of its genetic proximity to ftsY/ffh. May be a regulatory protein. The polypeptide is UPF0122 protein lwe1821 (Listeria welshimeri serovar 6b (strain ATCC 35897 / DSM 20650 / CCUG 15529 / CIP 8149 / NCTC 11857 / SLCC 5334 / V8)).